The chain runs to 1052 residues: Kruppel-like factor 18 (1052 aa).

C2H2-type zinc fingers lie at residues 964 to 988, 994 to 1018, and 1024 to 1046; these read YVCT…MRKH, YVCD…KKRH, and YLCS…AKVH.

It belongs to the krueppel C2H2-type zinc-finger protein family.

Its subcellular location is the nucleus. The chain is Kruppel-like factor 18 from Homo sapiens (Human).